The chain runs to 62 residues: Ferredoxin-1 (62 aa).

4Fe-4S ferredoxin-type domains are found at residues tryptophan 3–glycine 32 and lysine 33–asparagine 62. Residues cysteine 12 and cysteine 18 each coordinate [3Fe-4S] cluster. Residues cysteine 22, cysteine 42, cysteine 45, and cysteine 48 each contribute to the [4Fe-4S] cluster site. Cysteine 52 serves as a coordination point for [3Fe-4S] cluster.

In terms of assembly, homodimer. [3Fe-4S] cluster serves as cofactor. Requires [4Fe-4S] cluster as cofactor.

Ferredoxins are iron-sulfur proteins that transfer electrons in a wide variety of metabolic reactions. This ferredoxin serves as a carrier for pyruvate dehydrogenase. The polypeptide is Ferredoxin-1 (Nitratidesulfovibrio vulgaris (strain DSM 19637 / Miyazaki F) (Desulfovibrio vulgaris)).